The sequence spans 160 residues: 3-hydroxyacyl-[acyl-carrier-protein] dehydratase FabZ (160 aa).

The active site involves H59.

This sequence belongs to the thioester dehydratase family. FabZ subfamily.

The protein localises to the cytoplasm. It catalyses the reaction a (3R)-hydroxyacyl-[ACP] = a (2E)-enoyl-[ACP] + H2O. In terms of biological role, involved in unsaturated fatty acids biosynthesis. Catalyzes the dehydration of short chain beta-hydroxyacyl-ACPs and long chain saturated and unsaturated beta-hydroxyacyl-ACPs. The chain is 3-hydroxyacyl-[acyl-carrier-protein] dehydratase FabZ from Burkholderia thailandensis (strain ATCC 700388 / DSM 13276 / CCUG 48851 / CIP 106301 / E264).